The primary structure comprises 477 residues: Glycogen synthase (477 aa).

Residue Lys15 participates in ADP-alpha-D-glucose binding.

The protein belongs to the glycosyltransferase 1 family. Bacterial/plant glycogen synthase subfamily.

The catalysed reaction is [(1-&gt;4)-alpha-D-glucosyl](n) + ADP-alpha-D-glucose = [(1-&gt;4)-alpha-D-glucosyl](n+1) + ADP + H(+). Its pathway is glycan biosynthesis; glycogen biosynthesis. Synthesizes alpha-1,4-glucan chains using ADP-glucose. The polypeptide is Glycogen synthase (Streptococcus pneumoniae serotype 4 (strain ATCC BAA-334 / TIGR4)).